The chain runs to 107 residues: Replication restart protein PriB (107 aa).

Residues 8-107 (IENRLSLIGV…LHAEHIELLD (100 aa)) form the SSB domain.

The protein belongs to the PriB family. Homodimer. Interacts with PriA and DnaT. Component of the replication restart primosome. Primosome assembly occurs via a 'hand-off' mechanism. PriA binds to replication forks, subsequently PriB then DnaT bind; DnaT then displaces ssDNA to generate the helicase loading substrate.

Involved in the restart of stalled replication forks, which reloads the replicative helicase on sites other than the origin of replication; the PriA-PriB pathway is the major replication restart pathway. During primosome assembly it facilitates complex formation between PriA and DnaT on DNA; stabilizes PriA on DNA. Stimulates the DNA unwinding activity of PriA helicase. The sequence is that of Replication restart protein PriB from Actinobacillus succinogenes (strain ATCC 55618 / DSM 22257 / CCUG 43843 / 130Z).